The sequence spans 417 residues: UDP-N-acetylglucosamine 1-carboxyvinyltransferase (417 aa).

Position 22–23 (22–23) interacts with phosphoenolpyruvate; sequence KN. UDP-N-acetyl-alpha-D-glucosamine is bound at residue Arg-93. Cys-117 serves as the catalytic Proton donor. At Cys-117 the chain carries 2-(S-cysteinyl)pyruvic acid O-phosphothioketal. UDP-N-acetyl-alpha-D-glucosamine-binding positions include 122–126, Asp-305, and Ile-327; that span reads RPVDQ.

It belongs to the EPSP synthase family. MurA subfamily.

It localises to the cytoplasm. The catalysed reaction is phosphoenolpyruvate + UDP-N-acetyl-alpha-D-glucosamine = UDP-N-acetyl-3-O-(1-carboxyvinyl)-alpha-D-glucosamine + phosphate. It functions in the pathway cell wall biogenesis; peptidoglycan biosynthesis. Functionally, cell wall formation. Adds enolpyruvyl to UDP-N-acetylglucosamine. The polypeptide is UDP-N-acetylglucosamine 1-carboxyvinyltransferase (Chromobacterium violaceum (strain ATCC 12472 / DSM 30191 / JCM 1249 / CCUG 213 / NBRC 12614 / NCIMB 9131 / NCTC 9757 / MK)).